A 157-amino-acid polypeptide reads, in one-letter code: 2-C-methyl-D-erythritol 2,4-cyclodiphosphate synthase (157 aa).

Positions 8 and 10 each coordinate a divalent metal cation. 4-CDP-2-C-methyl-D-erythritol 2-phosphate contacts are provided by residues 8 to 10 (DIH) and 34 to 35 (HS). His42 is a binding site for a divalent metal cation. 4-CDP-2-C-methyl-D-erythritol 2-phosphate is bound by residues 56-58 (DIG), 61-65 (FPDTD), 132-135 (TTNE), and Arg142.

The protein belongs to the IspF family. Homotrimer. It depends on a divalent metal cation as a cofactor.

The enzyme catalyses 4-CDP-2-C-methyl-D-erythritol 2-phosphate = 2-C-methyl-D-erythritol 2,4-cyclic diphosphate + CMP. Its pathway is isoprenoid biosynthesis; isopentenyl diphosphate biosynthesis via DXP pathway; isopentenyl diphosphate from 1-deoxy-D-xylulose 5-phosphate: step 4/6. Involved in the biosynthesis of isopentenyl diphosphate (IPP) and dimethylallyl diphosphate (DMAPP), two major building blocks of isoprenoid compounds. Catalyzes the conversion of 4-diphosphocytidyl-2-C-methyl-D-erythritol 2-phosphate (CDP-ME2P) to 2-C-methyl-D-erythritol 2,4-cyclodiphosphate (ME-CPP) with a corresponding release of cytidine 5-monophosphate (CMP). The polypeptide is 2-C-methyl-D-erythritol 2,4-cyclodiphosphate synthase (Chloroherpeton thalassium (strain ATCC 35110 / GB-78)).